A 326-amino-acid polypeptide reads, in one-letter code: MSERARLALEDPLSTTHEPVLLSAALTFLAPRDGGRYIDATFGGGGHSRAILEASAPSGQVLAIDADPAAVARARALAERYPGRLLPCHGNFRDLARLAQSYGFVPVDGILFDLGLSSDQLADPARGFSFQLAGPLDMRFDPTSGEPAAVIVNTWSAEELAELFWQYGEEPRAWAIAQTIVAERARQPIETTTQLAALVARVAGSRRERIHPATRVFQALRIAVNQELEALAAGLAQAVELLRPGGRLVVIAFHSLEDRLVKQFFRREAAACLCPPGTPVCICGHRPRLRLLTPRPVRPSAEEITRNPRSRSARLRAAERIAHDGR.

Residues 45–47 (GGH), D65, D113, and Q120 each bind S-adenosyl-L-methionine. Residues 299–326 (PSAEEITRNPRSRSARLRAAERIAHDGR) are disordered. Residues 316 to 326 (RAAERIAHDGR) show a composition bias toward basic and acidic residues.

It belongs to the methyltransferase superfamily. RsmH family.

It localises to the cytoplasm. It catalyses the reaction cytidine(1402) in 16S rRNA + S-adenosyl-L-methionine = N(4)-methylcytidine(1402) in 16S rRNA + S-adenosyl-L-homocysteine + H(+). Its function is as follows. Specifically methylates the N4 position of cytidine in position 1402 (C1402) of 16S rRNA. The polypeptide is Ribosomal RNA small subunit methyltransferase H (Thermomicrobium roseum (strain ATCC 27502 / DSM 5159 / P-2)).